Here is a 428-residue protein sequence, read N- to C-terminus: UPF0597 protein BF3560 (428 aa).

It belongs to the UPF0597 family.

In Bacteroides fragilis (strain ATCC 25285 / DSM 2151 / CCUG 4856 / JCM 11019 / LMG 10263 / NCTC 9343 / Onslow / VPI 2553 / EN-2), this protein is UPF0597 protein BF3560.